The following is a 604-amino-acid chain: MAMRSHYCGLVTEALMGQTVTLAGWVNRRRDHGGVIFIDLRDREGNVQVVCDPDRADMFKTAEGVRNEFCVQVKGLVRARPEGTTNDSLKSGRIEVLCHELNVLNPSVTPPFQMDDENLSETTRLTHRVLDLRRPYMQRNLMLRYKTAIQVRNFLDKEGFIDIETPMLGKSTPEGARDYLVPSRVHDGQFFALPQSPQLYKQMLMVAGYDRYYQITKCFRDEDLRADRQPEFTQIDCETSFLNEEEIRAIFQRMVTEVFKTQLDVDLGEFPIMTYQDAAFRFGSDKPDLRVKLEFTELTEVMKDVDFKVFSGAANMQGGRVVALRVPGGARENGGLSRGEIDAYTEFVKIYGAKGLAYIKVNELAKGRDGLQSPIVKNIHDAAIAEILKRTGAQDGDLLFFGADKTKVVNDAIGALRLKIGHSEFGRKNGLFENVWAPLWVVDFPMFEYDEDDARWVAVHHPFTSPKDGHEDLMDTDPGKCLAKAYDMVLNGWELGGGSVRIHRAEVQSKVFAALKLTPEDARAKFGYLLDALQYGAPPHGGLAFGLDRLITLMTGAESIRDVIAFPKTQRAQDLLTQAPSPVDEKQLRELHIRLRNPDAAKAA.

Glutamate 174 lines the L-aspartate pocket. The interval 198–201 is aspartate; sequence QLYK. Arginine 220 provides a ligand contact to L-aspartate. Residues 220-222 and glutamine 229 each bind ATP; that span reads RDE. Histidine 460 contributes to the L-aspartate binding site. An ATP-binding site is contributed by glutamate 494. Residue arginine 501 coordinates L-aspartate. Residue 546–549 participates in ATP binding; sequence GLDR.

This sequence belongs to the class-II aminoacyl-tRNA synthetase family. Type 1 subfamily. In terms of assembly, homodimer.

Its subcellular location is the cytoplasm. The catalysed reaction is tRNA(Asx) + L-aspartate + ATP = L-aspartyl-tRNA(Asx) + AMP + diphosphate. Its function is as follows. Aspartyl-tRNA synthetase with relaxed tRNA specificity since it is able to aspartylate not only its cognate tRNA(Asp) but also tRNA(Asn). Reaction proceeds in two steps: L-aspartate is first activated by ATP to form Asp-AMP and then transferred to the acceptor end of tRNA(Asp/Asn). The sequence is that of Aspartate--tRNA(Asp/Asn) ligase from Paracidovorax citrulli (strain AAC00-1) (Acidovorax citrulli).